A 58-amino-acid polypeptide reads, in one-letter code: Sperm protamine P2 (58 aa).

The disordered stretch occupies residues 1–58; that stretch reads RRRRRRGKGRGKKRKGKGKKRGKGRRRGSKGRKKKKGKGKKRKRRRRRRRKGSKGKGK.

As to expression, gonads.

It is found in the nucleus. The protein localises to the chromosome. Protamines substitute for histones in the chromatin of sperm during the haploid phase of spermatogenesis. They compact sperm DNA into a highly condensed, stable and inactive complex. The chain is Sperm protamine P2 from Bolinus brandaris (Purple dye murex).